The primary structure comprises 228 residues: Ribose-5-phosphate isomerase A (228 aa).

Substrate-binding positions include 29–32, 84–87, and 97–100; these read TGST, DGAD, and KGGG. The Proton acceptor role is filled by Glu-106. A substrate-binding site is contributed by Lys-124.

This sequence belongs to the ribose 5-phosphate isomerase family. In terms of assembly, homodimer.

The catalysed reaction is aldehydo-D-ribose 5-phosphate = D-ribulose 5-phosphate. Its pathway is carbohydrate degradation; pentose phosphate pathway; D-ribose 5-phosphate from D-ribulose 5-phosphate (non-oxidative stage): step 1/1. In terms of biological role, catalyzes the reversible conversion of ribose-5-phosphate to ribulose 5-phosphate. The protein is Ribose-5-phosphate isomerase A of Sphingopyxis alaskensis (strain DSM 13593 / LMG 18877 / RB2256) (Sphingomonas alaskensis).